Here is an 85-residue protein sequence, read N- to C-terminus: DNA-directed RNA polymerase subunit omega (85 aa).

It belongs to the RNA polymerase subunit omega family. As to quaternary structure, the RNAP catalytic core consists of 2 alpha, 1 beta, 1 beta' and 1 omega subunit. When a sigma factor is associated with the core the holoenzyme is formed, which can initiate transcription.

It carries out the reaction RNA(n) + a ribonucleoside 5'-triphosphate = RNA(n+1) + diphosphate. Its function is as follows. Promotes RNA polymerase assembly. Latches the N- and C-terminal regions of the beta' subunit thereby facilitating its interaction with the beta and alpha subunits. The chain is DNA-directed RNA polymerase subunit omega from Tropheryma whipplei (strain TW08/27) (Whipple's bacillus).